Consider the following 340-residue polypeptide: Adenosine receptor A2b (340 aa).

Topologically, residues 1–6 (MNTMKT) are extracellular. The chain crosses the membrane as a helical span at residues 7–31 (TYIVLELIIAVLSIAGNVLVCWAVA). At 32–41 (INSTLKNATN) the chain is on the cytoplasmic side. Residues 42 to 65 (YFLVSLAVADIAVGLLAIPFAITI) traverse the membrane as a helical segment. Over 66–76 (SIGFQVDFHSC) the chain is Extracellular. A disulfide bridge connects residues Cys-76 and Cys-171. The helical transmembrane segment at 77 to 99 (LFFACFVLVLTQSSIFSLLAVAI) threads the bilayer. Topologically, residues 100–119 (DRYLAIKIPLRYNSLVTGKR) are cytoplasmic. Residues 120–142 (ARGLIAVLWLLSFVIGLTPLMGW) form a helical membrane-spanning segment. Residues 143–178 (NKAMSGCPNSTNETGADHGAGHHGCFISCLFENVVT) lie on the Extracellular side of the membrane. Asn-151 and Asn-154 each carry an N-linked (GlcNAc...) asparagine glycan. An adenosine-binding site is contributed by Glu-174. The chain crosses the membrane as a helical span at residues 179–203 (MSYMVYFNFFGCVLLPLIIMLGIYI). Residues 204 to 235 (KIFMVACKQLHQIELMGNSRTTLQKEVHAAKS) are Cytoplasmic-facing. Residues 236-259 (LAIIVGLFAFCWLPLHILNCITHF) form a helical membrane-spanning segment. An adenosine-binding site is contributed by Asn-254. Residues 260–267 (HEEFSKSK) are Extracellular-facing. The chain crosses the membrane as a helical span at residues 268 to 291 (PEWVMYVAIILSHANSVINPIIYA). Adenosine is bound by residues Ser-279 and His-280. The Cytoplasmic segment spans residues 292 to 340 (YRIRDFRYTFHKIISKILCKTDDFPKCTTDNNQHLTVTNVNAPAASVTI). A lipid anchor (S-palmitoyl cysteine) is attached at Cys-310.

Belongs to the G-protein coupled receptor 1 family.

It is found in the cell membrane. Functionally, receptor for adenosine. The activity of this receptor is mediated by G proteins which activate adenylyl cyclase. The protein is Adenosine receptor A2b (ADORA2B) of Gallus gallus (Chicken).